Here is a 398-residue protein sequence, read N- to C-terminus: Arginine biosynthesis bifunctional protein ArgJ (398 aa).

6 residues coordinate substrate: T148, K174, T185, E271, N393, and T398. T185 serves as the catalytic Nucleophile.

Belongs to the ArgJ family. Heterotetramer of two alpha and two beta chains.

The protein resides in the cytoplasm. The enzyme catalyses N(2)-acetyl-L-ornithine + L-glutamate = N-acetyl-L-glutamate + L-ornithine. It catalyses the reaction L-glutamate + acetyl-CoA = N-acetyl-L-glutamate + CoA + H(+). The protein operates within amino-acid biosynthesis; L-arginine biosynthesis; L-ornithine and N-acetyl-L-glutamate from L-glutamate and N(2)-acetyl-L-ornithine (cyclic): step 1/1. It functions in the pathway amino-acid biosynthesis; L-arginine biosynthesis; N(2)-acetyl-L-ornithine from L-glutamate: step 1/4. Catalyzes two activities which are involved in the cyclic version of arginine biosynthesis: the synthesis of N-acetylglutamate from glutamate and acetyl-CoA as the acetyl donor, and of ornithine by transacetylation between N(2)-acetylornithine and glutamate. This Listeria monocytogenes serovar 1/2a (strain ATCC BAA-679 / EGD-e) protein is Arginine biosynthesis bifunctional protein ArgJ.